Reading from the N-terminus, the 735-residue chain is Transcription factor RFX4 (735 aa).

The tract at residues 25–59 (SESKRFSSHSSIGNISNDENEEKENNRASKPHSTP) is disordered. Residues 44–126 (NEEKENNRAS…RRLGTRGQSK (83 aa)) mediate DNA binding. Residues 61 to 136 (TLQWLEENYE…YHYYGIAVKE (76 aa)) constitute a DNA-binding region (RFX-type winged-helix). The interval 315–487 (RFSQILKRQT…NELMRAMKGE (173 aa)) is necessary for dimerization.

It belongs to the RFX family.

The protein localises to the nucleus. Functionally, may activate transcription by interacting directly with the X-box. In Danio rerio (Zebrafish), this protein is Transcription factor RFX4 (rfx4).